Consider the following 498-residue polypeptide: ATP synthase subunit beta, chloroplastic (498 aa).

ATP is bound at residue 172 to 179; that stretch reads GGAGVGKT.

Belongs to the ATPase alpha/beta chains family. As to quaternary structure, F-type ATPases have 2 components, CF(1) - the catalytic core - and CF(0) - the membrane proton channel. CF(1) has five subunits: alpha(3), beta(3), gamma(1), delta(1), epsilon(1). CF(0) has four main subunits: a(1), b(1), b'(1) and c(9-12).

Its subcellular location is the plastid. The protein resides in the chloroplast thylakoid membrane. The catalysed reaction is ATP + H2O + 4 H(+)(in) = ADP + phosphate + 5 H(+)(out). Its function is as follows. Produces ATP from ADP in the presence of a proton gradient across the membrane. The catalytic sites are hosted primarily by the beta subunits. The polypeptide is ATP synthase subunit beta, chloroplastic (Panax ginseng (Korean ginseng)).